The chain runs to 85 residues: Large ribosomal subunit protein bL27 (85 aa).

Belongs to the bacterial ribosomal protein bL27 family.

This chain is Large ribosomal subunit protein bL27, found in Campylobacter curvus (strain 525.92).